Consider the following 568-residue polypeptide: MESSKKMDSPGALQTNPPLKLHTDRSAGTPVFVPEQGGYKEKFVKTVEDKYKCEKCHLVLCSPKQTECGHRFCESCMAALLSSSSPKCTACQESIVKDKVFKDNCCKREILALQIYCRNESRGCAEQLMLGHLLVHLKNDCHFEELPCVRPDCKEKVLRKDLRDHVEKACKYREATCSHCKSQVPMIALQKHEDTDCPCVVVSCPHKCSVQTLLRSELSAHLSECVNAPSTCSFKRYGCVFQGTNQQIKAHEASSAVQHVNLLKEWSNSLEKKVSLLQNESVEKNKSIQSLHNQICSFEIEIERQKEMLRNNESKILHLQRVIDSQAEKLKELDKEIRPFRQNWEEADSMKSSVESLQNRVTELESVDKSAGQVARNTGLLESQLSRHDQMLSVHDIRLADMDLRFQVLETASYNGVLIWKIRDYKRRKQEAVMGKTLSLYSQPFYTGYFGYKMCARVYLNGDGMGKGTHLSLFFVIMRGEYDALLPWPFKQKVTLMLMDQGSSRRHLGDAFKPDPNSSSFKKPTGEMNIASGCPVFVAQTVLENGTYIKDDTIFIKVIVDTSDLPDP.

Residues 1-28 are disordered; sequence MESSKKMDSPGALQTNPPLKLHTDRSAG. The residue at position 9 (S9) is a Phosphoserine. C56 participates in a covalent cross-link: Glycyl cysteine thioester (Cys-Gly) (interchain with G-Cter in ubiquitin). The segment at 68-77 adopts an RING-type zinc-finger fold; sequence CGHRFCESCM. A Glycyl cysteine thioester (Cys-Gly) (interchain with G-Cter in ubiquitin) cross-link involves residue C124. TRAF-type zinc fingers lie at residues 135–190 and 191–249; these read VHLK…IALQ and KHED…QQIK. A Glycyl lysine isopeptide (Lys-Gly) (interchain with G-Cter in ubiquitin) cross-link involves residue K168. Positions 267–338 form a coiled coil; sequence SNSLEKKVSL…KLKELDKEIR (72 aa). Residue K329 forms a Glycyl lysine isopeptide (Lys-Gly) (interchain with G-Cter in ubiquitin) linkage. The tract at residues 392 to 415 is (Microbial infection) Interaction with glycoprotein N of Andes and New York hantaviruses; that stretch reads LSVHDIRLADMDLRFQVLETASYN. The 146-residue stretch at 415 to 560 folds into the MATH domain; sequence NGVLIWKIRD…DDTIFIKVIV (146 aa).

The protein belongs to the TNF receptor-associated factor family. A subfamily. Homotrimer. Heterotrimer with TRAF2 and TRAF5. Interacts with LTBR/TNFRSF3, TNFRSF4, TNFRSF5/CD40, TNFRSF8/CD30, TNFRSF13C TNFRSF17/BCMA, TLR4 and EDAR. Interacts with MAP3K5, MAP3K14, TRAIP/TRIP, TDP2/TTRAP, TANK/ITRAF and TRAF3IP1. Interaction with TNFRSF5/CD40 is modulated by TANK/ITRAF, which competes for the same binding site. Interacts with TICAM1. Interacts with TRAFD1. Interacts with OTUB1, OTUB2 and OTUD5. Interacts with RNF216, OPTN and TBK1. Identified in a complex with TRAF2, MAP3K14 and BIRC3. Interacts with BIRC2 and BIRC3. Upon exposure to bacterial lipopolysaccharide (LPS), recruited to a transient complex containing TLR4, TRAF3, TRAF6, IKBKG, MAP3K7, MYD88, TICAM1, BIRC2, BIRC3 and UBE2N. Interacts (via RING-type zinc finger domain) with SRC. Interacts with CARD14. Interacts (via MATH domain) with PTPN22; the interaction promotes TRAF3 polyubiquitination. Interacts with MAVS. Directly interacts with DDX3X; this interaction stimulates TRAF3 'Lys-63' ubiquitination. Interacts with IRF3. Interacts with IKBKE in the course of Sendai virus infection. Interacts with TRIM35. Interacts with GAPDH; promoting TRAF3 ubiquitination. Interacts with PPP3CA and PPP3CB. Interacts with ATP1B1; promoting TRAF3 ubiquitination. Interacts with RALGDS. Interacts with FBXO11. In terms of assembly, (Microbial infection) Interacts (via N-terminus) with New York hantavirus glycoprotein N (via C-terminus); this interaction inhibits the formation of TRAF3-TBK1 complexes. As to quaternary structure, (Microbial infection) Interacts with Andes hantavirus glycoprotein N (via C-terminus); this interaction inhibits the formation of TRAF3-TBK1 complexes. (Microbial infection) Interacts with Tula hantavirus glycoprotein N (via C-terminus); this interaction inhibits the formation of TRAF3-TBK1 complexes. In terms of assembly, (Microbial infection) Interacts with Epstein-Barr virus protein LMP1. Undergoes 'Lys-48'-linked polyubiquitination, leading to its proteasomal degradation in response to signaling by TNFSF13B, TLR4 or through CD40. 'Lys-48'-linked polyubiquitinated form is deubiquitinated by OTUD7B, preventing TRAF3 proteolysis and over-activation of non-canonical NF-kappa-B. Undergoes 'Lys-63'-linked ubiquitination during early stages of virus infection, and 'Lys-48'-linked ubiquitination during later stages. Undergoes both 'Lys-48'-linked and 'Lys-63'-linked ubiquitination in response to TLR3 and TLR4 signaling. 'Lys-63'-linked ubiquitination can be mediated by TRIM35. Deubiquitinated by OTUB1, OTUB2 and OTUD5. Undergoes 'Lys-63'-linked deubiquitination by MYSM1 to terminate the pattern-recognition receptors/PRRs pathways. Also undergoes 'Lys-29'-linked ubiquitination on Cys-56 and Cys-124 by NEDD4L; leading to increased 'Lys-48'- and 'Lys-63'-linked ubiquitination as well as increased binding to TBK1. TLR4 signals emanating from bacteria containing vesicles trigger 'Lys-33'-linked polyubiquitination that promotes the assembly of the exocyst complex thereby connecting innate immune signaling to the cellular trafficking apparatus. Deubiquitinated by USP25 during viral infection, leading to TRAF3 stabilization and type I interferon production. Ubiquitinated at Lys-329 by the SCF(FBXL2) complex, leading to its degradation by the proteasome. 'Lys-63'-linked ubiquitination by FBXO11 in a NEDD8-dependent manner promotes the amplification of IFN-I signaling. Post-translationally, (Microbial infection) Cleaved by enterovirus D68 protease 2A; leading to inhibition of NF-kappa-B or IFN-beta triggered by TRAF3.

Its subcellular location is the cytoplasm. It is found in the endosome. The protein resides in the mitochondrion. It carries out the reaction S-ubiquitinyl-[E2 ubiquitin-conjugating enzyme]-L-cysteine + [acceptor protein]-L-lysine = [E2 ubiquitin-conjugating enzyme]-L-cysteine + N(6)-ubiquitinyl-[acceptor protein]-L-lysine.. In terms of biological role, cytoplasmic E3 ubiquitin ligase that regulates various signaling pathways, such as the NF-kappa-B, mitogen-activated protein kinase (MAPK) and interferon regulatory factor (IRF) pathways, and thus controls a lot of biological processes in both immune and non-immune cell types. In TLR and RLR signaling pathways, acts as an E3 ubiquitin ligase promoting the synthesis of 'Lys-63'-linked polyubiquitin chains on several substrates such as ASC that lead to the activation of the type I interferon response or the inflammasome. Following the activation of certain TLRs such as TLR4, acts as a negative NF-kappa-B regulator, possibly to avoid unregulated inflammatory response, and its degradation via 'Lys-48'-linked polyubiquitination is required for MAPK activation and production of inflammatory cytokines. Alternatively, when TLR4 orchestrates bacterial expulsion, TRAF3 undergoes 'Lys-33'-linked polyubiquitination and subsequently binds to RALGDS, mobilizing the exocyst complex to rapidly expel intracellular bacteria back for clearance. Also acts as a constitutive negative regulator of the alternative NF-kappa-B pathway, which controls B-cell survival and lymphoid organ development. Required for normal antibody isotype switching from IgM to IgG. Plays a role T-cell dependent immune responses. Down-regulates proteolytic processing of NFKB2, and thereby inhibits non-canonical activation of NF-kappa-B. Promotes ubiquitination and proteasomal degradation of MAP3K14. The chain is TNF receptor-associated factor 3 from Homo sapiens (Human).